The following is a 306-amino-acid chain: Porphobilinogen deaminase (306 aa).

Residue C239 is modified to S-(dipyrrolylmethanemethyl)cysteine.

It belongs to the HMBS family. As to quaternary structure, monomer. Dipyrromethane serves as cofactor.

It carries out the reaction 4 porphobilinogen + H2O = hydroxymethylbilane + 4 NH4(+). The protein operates within porphyrin-containing compound metabolism; protoporphyrin-IX biosynthesis; coproporphyrinogen-III from 5-aminolevulinate: step 2/4. Its function is as follows. Tetrapolymerization of the monopyrrole PBG into the hydroxymethylbilane pre-uroporphyrinogen in several discrete steps. In Helicobacter acinonychis (strain Sheeba), this protein is Porphobilinogen deaminase.